Here is a 267-residue protein sequence, read N- to C-terminus: L-aspartate dehydrogenase 2 (267 aa).

The NAD(+) site is built by A123 and N189. The active site involves H219.

It belongs to the L-aspartate dehydrogenase family.

It carries out the reaction L-aspartate + NADP(+) + H2O = oxaloacetate + NH4(+) + NADPH + H(+). The catalysed reaction is L-aspartate + NAD(+) + H2O = oxaloacetate + NH4(+) + NADH + H(+). The protein operates within cofactor biosynthesis; NAD(+) biosynthesis; iminoaspartate from L-aspartate (dehydrogenase route): step 1/1. Specifically catalyzes the NAD or NADP-dependent dehydrogenation of L-aspartate to iminoaspartate. The chain is L-aspartate dehydrogenase 2 from Bordetella pertussis (strain Tohama I / ATCC BAA-589 / NCTC 13251).